The following is a 145-amino-acid chain: 3-dehydroquinate dehydratase (145 aa).

The active-site Proton acceptor is the Tyr22. Residues Asn71, His77, and Asp84 each contribute to the substrate site. His97 acts as the Proton donor in catalysis. Residues 98 to 99 (LS) and Arg108 each bind substrate.

This sequence belongs to the type-II 3-dehydroquinase family. Homododecamer.

The enzyme catalyses 3-dehydroquinate = 3-dehydroshikimate + H2O. The protein operates within metabolic intermediate biosynthesis; chorismate biosynthesis; chorismate from D-erythrose 4-phosphate and phosphoenolpyruvate: step 3/7. Its function is as follows. Catalyzes a trans-dehydration via an enolate intermediate. The sequence is that of 3-dehydroquinate dehydratase from Francisella philomiragia subsp. philomiragia (strain ATCC 25017 / CCUG 19701 / FSC 153 / O#319-036).